The chain runs to 113 residues: Large ribosomal subunit protein bL17 (113 aa).

This sequence belongs to the bacterial ribosomal protein bL17 family. In terms of assembly, part of the 50S ribosomal subunit. Contacts protein L32.

The polypeptide is Large ribosomal subunit protein bL17 (Clostridium perfringens (strain ATCC 13124 / DSM 756 / JCM 1290 / NCIMB 6125 / NCTC 8237 / Type A)).